The sequence spans 124 residues: Quinol oxidase subunit 4 (124 aa).

3 helical membrane-spanning segments follow: residues I16–T36, L44–H64, and T78–A98.

This sequence belongs to the cytochrome c oxidase bacterial subunit 4 family.

Its subcellular location is the cell membrane. The enzyme catalyses 2 a quinol + O2 = 2 a quinone + 2 H2O. In terms of biological role, catalyzes quinol oxidation with the concomitant reduction of oxygen to water. Major component for energy conversion during vegetative growth. The protein is Quinol oxidase subunit 4 (qoxD) of Bacillus subtilis (strain 168).